The sequence spans 505 residues: Megakaryocyte-associated tyrosine-protein kinase (505 aa).

An SH3 domain is found at Ala46–Ala108. The 90-residue stretch at Trp120–Arg209 folds into the SH2 domain. A Protein kinase domain is found at Leu233–Arg481. ATP is bound by residues Ile239–Val247 and Lys260. The active-site Proton acceptor is Asp350. Positions Val483–Pro505 are disordered.

The protein belongs to the protein kinase superfamily. Tyr protein kinase family. CSK subfamily. Interacts with KIT. In terms of tissue distribution, most abundant in brain, and to a lesser extent in the spleen, the thymus and the liver. Also found in the T-cell lineage.

The protein resides in the cytoplasm. It is found in the membrane. It carries out the reaction L-tyrosyl-[protein] + ATP = O-phospho-L-tyrosyl-[protein] + ADP + H(+). Functionally, could play a significant role in the signal transduction of hematopoietic cells. May regulate tyrosine kinase activity of SRC-family members in brain by specifically phosphorylating their C-terminal regulatory tyrosine residue which acts as a negative regulatory site. It may play an inhibitory role in the control of T-cell proliferation. The polypeptide is Megakaryocyte-associated tyrosine-protein kinase (Matk) (Mus musculus (Mouse)).